Here is a 620-residue protein sequence, read N- to C-terminus: Endoglucanase 6 (620 aa).

The signal sequence occupies residues methionine 1–serine 22. Aspartate 78 functions as the Nucleophile in the catalytic mechanism. Residues histidine 411, aspartate 463, and glutamate 472 contribute to the active site. Residues asparagine 554 and asparagine 564 are each glycosylated (N-linked (GlcNAc...) asparagine).

Belongs to the glycosyl hydrolase 9 (cellulase E) family.

Its subcellular location is the secreted. The enzyme catalyses Endohydrolysis of (1-&gt;4)-beta-D-glucosidic linkages in cellulose, lichenin and cereal beta-D-glucans.. In Arabidopsis thaliana (Mouse-ear cress), this protein is Endoglucanase 6.